Here is a 474-residue protein sequence, read N- to C-terminus: tRNA-2-methylthio-N(6)-dimethylallyladenosine synthase (474 aa).

The 118-residue stretch at 3–120 (KKLHIKTWGC…LPEMINSVRG (118 aa)) folds into the MTTase N-terminal domain. Residues C12, C49, C83, C157, C161, and C164 each contribute to the [4Fe-4S] cluster site. In terms of domain architecture, Radical SAM core spans 143–375 (RAEGPTAFVS…QERINQQAMA (233 aa)). The TRAM domain occupies 378 to 441 (RRMLGTTQRI…PNSLRGKVVR (64 aa)).

It belongs to the methylthiotransferase family. MiaB subfamily. In terms of assembly, monomer. Requires [4Fe-4S] cluster as cofactor.

The protein resides in the cytoplasm. The catalysed reaction is N(6)-dimethylallyladenosine(37) in tRNA + (sulfur carrier)-SH + AH2 + 2 S-adenosyl-L-methionine = 2-methylsulfanyl-N(6)-dimethylallyladenosine(37) in tRNA + (sulfur carrier)-H + 5'-deoxyadenosine + L-methionine + A + S-adenosyl-L-homocysteine + 2 H(+). Functionally, catalyzes the methylthiolation of N6-(dimethylallyl)adenosine (i(6)A), leading to the formation of 2-methylthio-N6-(dimethylallyl)adenosine (ms(2)i(6)A) at position 37 in tRNAs that read codons beginning with uridine. The polypeptide is tRNA-2-methylthio-N(6)-dimethylallyladenosine synthase (Salmonella enteritidis PT4 (strain P125109)).